Consider the following 438-residue polypeptide: GTPase Der (438 aa).

EngA-type G domains follow at residues 2 to 164 and 173 to 343; these read HKVA…PEDD and IRIS…EKWQ. Residues 8-15, 55-59, 116-119, 179-186, 226-230, and 288-291 each bind GTP; these read GRPNVGKS, DTGGL, NKID, DTAGI, and NKWD. A KH-like domain is found at 344–428; the sequence is SRIGTSELNR…PVRLKWKEKG (85 aa).

It belongs to the TRAFAC class TrmE-Era-EngA-EngB-Septin-like GTPase superfamily. EngA (Der) GTPase family. In terms of assembly, associates with the 50S ribosomal subunit.

In terms of biological role, GTPase that plays an essential role in the late steps of ribosome biogenesis. This chain is GTPase Der, found in Deinococcus radiodurans (strain ATCC 13939 / DSM 20539 / JCM 16871 / CCUG 27074 / LMG 4051 / NBRC 15346 / NCIMB 9279 / VKM B-1422 / R1).